Consider the following 744-residue polypeptide: Probable ubiquitin carboxyl-terminal hydrolase MINDY-4 (744 aa).

Ser-143, Ser-220, and Ser-224 each carry phosphoserine. A disordered region spans residues 211 to 358 (GMMAGPVASS…QLVSDRTDDK (148 aa)). The span at 265-277 (VPDSSSDSVSRSP) shows a compositional bias: low complexity. Positions 290 to 299 (NVTSSSQGLS) are enriched in polar residues. Position 295 is a phosphoserine (Ser-295). Over residues 300-310 (QRDRPRLRSVS) the composition is skewed to basic and acidic residues. Residue Cys-443 is the Nucleophile of the active site. The active-site Proton acceptor is the His-664.

The protein belongs to the MINDY deubiquitinase family. FAM188 subfamily.

The catalysed reaction is Thiol-dependent hydrolysis of ester, thioester, amide, peptide and isopeptide bonds formed by the C-terminal Gly of ubiquitin (a 76-residue protein attached to proteins as an intracellular targeting signal).. Its function is as follows. Probable hydrolase that can remove 'Lys-48'-linked conjugated ubiquitin from proteins. The protein is Probable ubiquitin carboxyl-terminal hydrolase MINDY-4 (Mindy4) of Mus musculus (Mouse).